A 242-amino-acid chain; its full sequence is DNA repair protein RecO (242 aa).

It belongs to the RecO family.

In terms of biological role, involved in DNA repair and RecF pathway recombination. This Vibrio atlanticus (strain LGP32) (Vibrio splendidus (strain Mel32)) protein is DNA repair protein RecO.